Here is a 909-residue protein sequence, read N- to C-terminus: Probable DNA-directed RNA polymerase subunit beta (909 aa).

It belongs to the RNA polymerase beta chain family.

The catalysed reaction is RNA(n) + a ribonucleoside 5'-triphosphate = RNA(n+1) + diphosphate. In terms of biological role, required for late and very late gene expression. May be a component of the novel RNA polymerase activity induced by baculovirus infection. The sequence is that of Probable DNA-directed RNA polymerase subunit beta (LEF-8) from Lepidoptera (butterflies and moths).